A 732-amino-acid chain; its full sequence is uncharacterized protein (732 aa).

A run of 2 helical transmembrane segments spans residues 687 to 707 (YLFPVVGVAALLLIGNMGSDL) and 712 to 732 (GVKVATALSAMLLAIFAYYTS).

Belongs to the FadG family.

The protein localises to the cell membrane. This is an uncharacterized protein from Bacillus subtilis (strain 168).